A 122-amino-acid polypeptide reads, in one-letter code: Large ribosomal subunit protein uL14 (122 aa).

This sequence belongs to the universal ribosomal protein uL14 family. As to quaternary structure, part of the 50S ribosomal subunit. Forms a cluster with proteins L3 and L19. In the 70S ribosome, L14 and L19 interact and together make contacts with the 16S rRNA in bridges B5 and B8.

Binds to 23S rRNA. Forms part of two intersubunit bridges in the 70S ribosome. This Methylococcus capsulatus (strain ATCC 33009 / NCIMB 11132 / Bath) protein is Large ribosomal subunit protein uL14.